The primary structure comprises 285 residues: Putative sugar uptake protein lin0444 (285 aa).

9 consecutive transmembrane segments (helical) span residues 2-21 (SIYLIALLPVLGWGFMPIIA), 31-50 (QLLGTSISALLFAFILFWIL), 55-77 (TVLSFIVSFVSGIFWSFGQLLQF), 111-133 (WQTVTAVIIGVVAVILILIGVVM), 146-168 (SVSFHVYGIVILSSFFLTLYVVT), 172-194 (FDVTGFSIILPQAIGMLTCAIGI), 207-229 (VTFNLMTGLSWSIANLGMFLATA), 233-255 (VATSFSISQACVIVATIGGILIF), and 262-284 (LEWTFILSGILLIMVGVVFLSLL).

The protein belongs to the GRP transporter (TC 2.A.7.5) family.

The protein localises to the cell membrane. The polypeptide is Putative sugar uptake protein lin0444 (Listeria innocua serovar 6a (strain ATCC BAA-680 / CLIP 11262)).